A 544-amino-acid chain; its full sequence is Tyrosyl-DNA phosphodiesterase 1 (544 aa).

His182 acts as the Nucleophile in catalysis. Substrate is bound at residue Lys184. Residues 312 to 316 are interaction with DNA; it reads SIGTS. Catalysis depends on His432, which acts as the Proton donor/acceptor. Substrate is bound at residue Lys434.

It belongs to the tyrosyl-DNA phosphodiesterase family.

It localises to the nucleus. Its function is as follows. DNA repair enzyme that can remove a variety of covalent adducts from DNA through hydrolysis of a 3'-phosphodiester bond, giving rise to DNA with a free 3' phosphate. Catalyzes the hydrolysis of dead-end complexes between DNA and the topoisomerase I active site tyrosine residue. Hydrolyzes 3'-phosphoglycolates on protruding 3' ends on DNA double-strand breaks due to DNA damage by radiation and free radicals. Also cleaves 5' phosphotyrosyl adducts resulting from dead-end complexes between DNA and the active site tyrosine of topoisomerase II. Contributes to DNA repair after radiation damage. Acts on blunt-ended double-strand DNA breaks and on single-stranded DNA. May have low 3'exonuclease activity and may be able to remove a single nucleoside from the 3'end of DNA and RNA molecules with 3'hydroxyl groups. Has no exonuclease activity towards DNA or RNA with a 3'phosphate. The sequence is that of Tyrosyl-DNA phosphodiesterase 1 (TDP1) from Saccharomyces cerevisiae (strain ATCC 204508 / S288c) (Baker's yeast).